The following is a 396-amino-acid chain: L-lactate dehydrogenase (396 aa).

An FMN hydroxy acid dehydrogenase domain is found at 1–380 (MIISAASDYR…SGDSLVQELG (380 aa)). Y24 contacts substrate. 2 residues coordinate FMN: S106 and Q127. Y129 provides a ligand contact to substrate. Position 155 (T155) interacts with FMN. Position 164 (R164) interacts with substrate. Position 251 (K251) interacts with FMN. The Proton acceptor role is filled by H275. R278 is a binding site for substrate. 306–330 (DSGIRNGLDVVRMIALGADTVLLGR) is an FMN binding site.

It belongs to the FMN-dependent alpha-hydroxy acid dehydrogenase family. Requires FMN as cofactor.

Its subcellular location is the cell inner membrane. It catalyses the reaction (S)-lactate + A = pyruvate + AH2. In terms of biological role, catalyzes the conversion of L-lactate to pyruvate. Is coupled to the respiratory chain. The sequence is that of L-lactate dehydrogenase from Salmonella enteritidis PT4 (strain P125109).